The following is a 282-amino-acid chain: Gap junction Cx32.7 protein (282 aa).

The Cytoplasmic segment spans residues 2–13; the sequence is GEWDLLGRLLDK. A helical transmembrane segment spans residues 14 to 36; it reads VQSHSTVIGKVWLTVLFVFRILV. Residues 37 to 76 lie on the Extracellular side of the membrane; it reads LRTGADRVWGDEQSDFVCNTQQPGCENVCYDLAFPISHVR. Residues 77–99 traverse the membrane as a helical segment; it reads FWFLQIIAVATPKLLYLGHVLHV. Residues 100 to 148 lie on the Cytoplasmic side of the membrane; the sequence is IHAEKKMKERMKKQAELDDQTNLFLRKAYKVPKYTKSSGKISIRGRLLR. Residues 149 to 171 traverse the membrane as a helical segment; that stretch reads SYVYHLVAKIILEVLFIVGQYFL. Topologically, residues 172-203 are extracellular; that stretch reads YGFTLDTRYVCTRFPCPHKVDCFLSRPTEKSV. The helical transmembrane segment at 204–226 threads the bilayer; it reads IIWFMLVAAFVSLFLSLVELFYL. The Cytoplasmic segment spans residues 227-282; it reads CVKAAKECMARRQDYTVTPVTPPLLARKSFKSHKEVFQNCVNEPASPENNMEEVHI.

The protein belongs to the connexin family. Alpha-type (group II) subfamily. A connexon is composed of a hexamer of connexins. In terms of tissue distribution, expressed equally in incompetent and competent ovaries.

It localises to the cell membrane. The protein localises to the cell junction. The protein resides in the gap junction. One gap junction consists of a cluster of closely packed pairs of transmembrane channels, the connexons, through which materials of low MW diffuse from one cell to a neighboring cell. This Micropogonias undulatus (Atlantic croaker) protein is Gap junction Cx32.7 protein.